The primary structure comprises 76 residues: Small ribosomal subunit protein bS18 (76 aa).

The protein belongs to the bacterial ribosomal protein bS18 family. In terms of assembly, part of the 30S ribosomal subunit. Forms a tight heterodimer with protein bS6.

Its function is as follows. Binds as a heterodimer with protein bS6 to the central domain of the 16S rRNA, where it helps stabilize the platform of the 30S subunit. The sequence is that of Small ribosomal subunit protein bS18 from Pelotomaculum thermopropionicum (strain DSM 13744 / JCM 10971 / SI).